The sequence spans 312 residues: RNA pseudouridylate synthase domain-containing protein 1 (312 aa).

Met-1 carries the N-acetylmethionine modification. Residue Asp-67 is part of the active site. A disordered region spans residues 256-298; it reads ATPDPDPEDRGPRPGSPSALLPGPGRPPPPPTKPPETEAQRGP. Positions 279–289 are enriched in pro residues; it reads PGRPPPPPTKP.

It belongs to the pseudouridine synthase RluA family.

In Homo sapiens (Human), this protein is RNA pseudouridylate synthase domain-containing protein 1 (RPUSD1).